The following is a 135-amino-acid chain: UPF0299 membrane protein YE2790 (135 aa).

4 consecutive transmembrane segments (helical) span residues 4-24 (VTSL…CLWA), 30-50 (LLLP…FALL), 63-83 (GCHL…VGVM), and 93-113 (FGPI…VVGY).

Belongs to the UPF0299 family.

Its subcellular location is the cell inner membrane. The polypeptide is UPF0299 membrane protein YE2790 (Yersinia enterocolitica serotype O:8 / biotype 1B (strain NCTC 13174 / 8081)).